The sequence spans 596 residues: SUN domain-containing protein 4 (596 aa).

A helical membrane pass occupies residues 28–48 (VSLSLVFLIWGLVFLSTLWIS). 2 disordered regions span residues 58–98 (LVDS…LSSD) and 139–158 (KQSE…TTGS). Residues 66–77 (EPDDERADETAE) are compositionally biased toward acidic residues. Polar residues-rich tracts occupy residues 80–95 (DATS…NPGL) and 141–158 (SEIN…TTGS). Positions 179 to 343 (SNSRDKSLSG…SLLEVYGVDA (165 aa)) constitute an SUN domain. Residues 366–396 (DTEQKEKKTMQAKESFESDEDKSKQKEKEQE) show a composition bias toward basic and acidic residues. The segment at 366–410 (DTEQKEKKTMQAKESFESDEDKSKQKEKEQEASPENAVVKDEVSL) is disordered. Positions 475-544 (ASKREKEVET…LERLEWMEKK (70 aa)) form a coiled coil. Helical transmembrane passes span 545-565 (GVVV…AVVF) and 576-596 (GGLA…ILSL).

In terms of assembly, forms homomers and heteromers with SUN3. Interacts with SUN1, SUN2 and TIK.

The protein resides in the nucleus membrane. Its subcellular location is the endoplasmic reticulum membrane. In terms of biological role, encodes a member of the mid-SUN subfamily of SUN-domain proteins that is localized to both the nuclear envelope and the ER. It is involved in early seed development and nuclear morphology. [TAIR]. The polypeptide is SUN domain-containing protein 4 (Arabidopsis thaliana (Mouse-ear cress)).